Reading from the N-terminus, the 469-residue chain is 3-isopropylmalate dehydratase large subunit (469 aa).

[4Fe-4S] cluster contacts are provided by cysteine 347, cysteine 408, and cysteine 411.

It belongs to the aconitase/IPM isomerase family. LeuC type 1 subfamily. In terms of assembly, heterodimer of LeuC and LeuD. Requires [4Fe-4S] cluster as cofactor.

It carries out the reaction (2R,3S)-3-isopropylmalate = (2S)-2-isopropylmalate. It functions in the pathway amino-acid biosynthesis; L-leucine biosynthesis; L-leucine from 3-methyl-2-oxobutanoate: step 2/4. Catalyzes the isomerization between 2-isopropylmalate and 3-isopropylmalate, via the formation of 2-isopropylmaleate. The protein is 3-isopropylmalate dehydratase large subunit of Haemophilus influenzae (strain ATCC 51907 / DSM 11121 / KW20 / Rd).